A 429-amino-acid chain; its full sequence is MSSSYASSCTKLISLTKQLSSYANQGNHEQALNLFLQMHSSFALPLDAHVFSLALKSCAAAFRPVLGGSVHAHSVKSNFLSNPFVGCALLDMYGKCLSVSHARKLFDEIPQRNAVVWNAMISHYTHCGKVKEAVELYEAMDVMPNESSFNAIIKGLVGTEDGSYRAIEFYRKMIEFRFKPNLITLLALVSACSAIGAFRLIKEIHSYAFRNLIEPHPQLKSGLVEAYGRCGSIVYVQLVFDSMEDRDVVAWSSLISAYALHGDAESALKTFQEMELAKVTPDDIAFLNVLKACSHAGLADEALVYFKRMQGDYGLRASKDHYSCLVDVLSRVGRFEEAYKVIQAMPEKPTAKTWGALLGACRNYGEIELAEIAARELLMVEPENPANYVLLGKIYMSVGRQEEAERLRLKMKESGVKVSPGSSWCLFKD.

PPR repeat units follow at residues 11 to 45 (KLISLTKQLSSYANQGNHEQALNLFLQMHSSFALP), 47 to 81 (DAHVFSLALKSCAAAFRPVLGGSVHAHSVKSNFLS), 82 to 112 (NPFVGCALLDMYGKCLSVSHARKLFDEIPQR), 113 to 147 (NAVVWNAMISHYTHCGKVKEAVELYEAMDVMPNES), 148 to 180 (SFNAIIKGLVGTEDGSYRAIEFYRKMIEFRFKP), 181 to 215 (NLITLLALVSACSAIGAFRLIKEIHSYAFRNLIEP), 216 to 246 (HPQLKSGLVEAYGRCGSIVYVQLVFDSMEDR), 247 to 281 (DVVAWSSLISAYALHGDAESALKTFQEMELAKVTP), 282 to 312 (DDIAFLNVLKACSHAGLADEALVYFKRMQGD), and 318 to 348 (SKDHYSCLVDVLSRVGRFEEAYKVIQAMPEK). The type E motif stretch occupies residues 353-428 (TWGALLGACR…SPGSSWCLFK (76 aa)).

It belongs to the PPR family. PCMP-E subfamily.

In Arabidopsis thaliana (Mouse-ear cress), this protein is Putative pentatricopeptide repeat-containing protein At1g03510 (PCMP-E3).